The sequence spans 96 residues: Translation initiation factor 1A 1 (96 aa).

The S1-like domain occupies 8–82; it reads GSHDLRMPDD…EKGDITWRYE (75 aa).

Belongs to the eIF-1A family.

Functionally, seems to be required for maximal rate of protein biosynthesis. Enhances ribosome dissociation into subunits and stabilizes the binding of the initiator Met-tRNA(I) to 40 S ribosomal subunits. The chain is Translation initiation factor 1A 1 from Haloquadratum walsbyi (strain DSM 16790 / HBSQ001).